A 422-amino-acid chain; its full sequence is UDP-N-acetylglucosamine 1-carboxyvinyltransferase (422 aa).

22-23 is a phosphoenolpyruvate binding site; sequence KN. R94 contacts UDP-N-acetyl-alpha-D-glucosamine. C118 (proton donor) is an active-site residue. 2-(S-cysteinyl)pyruvic acid O-phosphothioketal is present on C118. UDP-N-acetyl-alpha-D-glucosamine-binding positions include 123–127, D309, and L331; that span reads RPIDL.

The protein belongs to the EPSP synthase family. MurA subfamily.

The protein localises to the cytoplasm. The catalysed reaction is phosphoenolpyruvate + UDP-N-acetyl-alpha-D-glucosamine = UDP-N-acetyl-3-O-(1-carboxyvinyl)-alpha-D-glucosamine + phosphate. The protein operates within cell wall biogenesis; peptidoglycan biosynthesis. Its function is as follows. Cell wall formation. Adds enolpyruvyl to UDP-N-acetylglucosamine. This chain is UDP-N-acetylglucosamine 1-carboxyvinyltransferase, found in Sulfurimonas denitrificans (strain ATCC 33889 / DSM 1251) (Thiomicrospira denitrificans (strain ATCC 33889 / DSM 1251)).